The following is a 230-amino-acid chain: Ion-translocating oxidoreductase complex subunit E (230 aa).

6 consecutive transmembrane segments (helical) span residues 18 to 38 (ALVQ…ATNA), 39 to 59 (LGLG…VSAL), 63 to 83 (TPAE…VSAV), 86 to 106 (LINA…PLIV), 125 to 145 (WLSA…MFVL), and 182 to 202 (PFLL…MLAV).

The protein belongs to the NqrDE/RnfAE family. In terms of assembly, the complex is composed of six subunits: RsxA, RsxB, RsxC, RsxD, RsxE and RsxG.

The protein localises to the cell inner membrane. Functionally, part of a membrane-bound complex that couples electron transfer with translocation of ions across the membrane. Required to maintain the reduced state of SoxR. The chain is Ion-translocating oxidoreductase complex subunit E from Salmonella agona (strain SL483).